We begin with the raw amino-acid sequence, 542 residues long: Protein phosphatase 1G (542 aa).

Gly2 carries N-myristoyl glycine lipidation. Omega-N-methylarginine is present on Arg22. The 477-residue stretch at 26–502 (PYGFSAMQGW…DNMTCIIICF (477 aa)) folds into the PPM-type phosphatase domain. Asp60 and Gly61 together coordinate Mn(2+). Disordered regions lie at residues 118-139 (AGRPTEDEDDKEKVADEDDVDN) and 162-325 (QNCQ…SDSG). Residue Thr122 is modified to Phosphothreonine. 2 stretches are compositionally biased toward acidic residues: residues 123-139 (EDEDDKEKVADEDDVDN) and 259-309 (DSED…DEEM). Lys380 is subject to N6-acetyllysine. Mn(2+) contacts are provided by Asp438 and Asp493. The disordered stretch occupies residues 510–542 (LQPESGKRKLEEALSTEGAEENGNSDKKKAKRD). Ser524 carries the post-translational modification Phosphoserine.

This sequence belongs to the PP2C family. Interacts with NOL3; may dephosphorylate NOL3. Mg(2+) serves as cofactor. Requires Mn(2+) as cofactor.

The protein localises to the cytoplasm. It localises to the membrane. The enzyme catalyses O-phospho-L-seryl-[protein] + H2O = L-seryl-[protein] + phosphate. It carries out the reaction O-phospho-L-threonyl-[protein] + H2O = L-threonyl-[protein] + phosphate. In Rattus norvegicus (Rat), this protein is Protein phosphatase 1G.